The following is a 157-amino-acid chain: 2-C-methyl-D-erythritol 2,4-cyclodiphosphate synthase (157 aa).

Residues Asp8 and His10 each coordinate a divalent metal cation. 4-CDP-2-C-methyl-D-erythritol 2-phosphate contacts are provided by residues 8-10 and 34-35; these read DVH and HS. An a divalent metal cation-binding site is contributed by His42. 4-CDP-2-C-methyl-D-erythritol 2-phosphate-binding positions include 56–58, 61–65, 100–106, 132–135, and Phe139; these read DIG, FPDTD, AQRPKMA, and TTEE.

Belongs to the IspF family. As to quaternary structure, homotrimer. A divalent metal cation is required as a cofactor.

It carries out the reaction 4-CDP-2-C-methyl-D-erythritol 2-phosphate = 2-C-methyl-D-erythritol 2,4-cyclic diphosphate + CMP. Its pathway is isoprenoid biosynthesis; isopentenyl diphosphate biosynthesis via DXP pathway; isopentenyl diphosphate from 1-deoxy-D-xylulose 5-phosphate: step 4/6. In terms of biological role, involved in the biosynthesis of isopentenyl diphosphate (IPP) and dimethylallyl diphosphate (DMAPP), two major building blocks of isoprenoid compounds. Catalyzes the conversion of 4-diphosphocytidyl-2-C-methyl-D-erythritol 2-phosphate (CDP-ME2P) to 2-C-methyl-D-erythritol 2,4-cyclodiphosphate (ME-CPP) with a corresponding release of cytidine 5-monophosphate (CMP). This chain is 2-C-methyl-D-erythritol 2,4-cyclodiphosphate synthase, found in Trichlorobacter lovleyi (strain ATCC BAA-1151 / DSM 17278 / SZ) (Geobacter lovleyi).